Reading from the N-terminus, the 197-residue chain is Putative glutathione-dependent formaldehyde-activating enzyme (197 aa).

Residues Phe22–Asp171 form the CENP-V/GFA domain. Residues Cys29, Cys31, Cys50, Cys52, Cys55, Cys97, and Cys100 each contribute to the Zn(2+) site.

The protein belongs to the Gfa family. It depends on Zn(2+) as a cofactor.

The enzyme catalyses S-(hydroxymethyl)glutathione = glutathione + formaldehyde. It participates in one-carbon metabolism; formaldehyde degradation; formate from formaldehyde (glutathione route): step 1/3. Catalyzes the condensation of formaldehyde and glutathione to S-hydroxymethylglutathione. This is Putative glutathione-dependent formaldehyde-activating enzyme from Emericella nidulans (strain FGSC A4 / ATCC 38163 / CBS 112.46 / NRRL 194 / M139) (Aspergillus nidulans).